Reading from the N-terminus, the 1268-residue chain is SR-related and CTD-associated factor 8 (1268 aa).

The region spanning 1–139 (MEAVKTFNSE…PLLDMAAGIP (139 aa)) is the CID domain. Thr-6 is modified (phosphothreonine). A Glycyl lysine isopeptide (Lys-Gly) (interchain with G-Cter in SUMO1) cross-link involves residue Lys-18. At Ser-273 the chain carries Phosphoserine. Disordered regions lie at residues 322–355 (QQQP…QQHF) and 385–469 (EIFE…PVRS). Polar residues predominate over residues 342-354 (HSASPSQGSSQQH). The span at 394–443 (VAVRSRSRTHSRSRSRSPRKRRSRSRSGSRKRKHRKRSRSRSRERKRKSS) shows a compositional bias: basic residues. Basic and acidic residues predominate over residues 447 to 461 (SSERRAREREKERQK). Residues 477 to 551 (TTLWVGQVDK…KVIKIAWALN (75 aa)) enclose the RRM domain. Thr-615 carries the post-translational modification Phosphothreonine. Residue Ser-617 is modified to Phosphoserine. The segment at 753-808 (AGNVFNPPSKAEPEEKVPHLTEHQIPSGENTRPVIPSDIPSSAPMLAQPPGASNTS) is disordered. Residues 763 to 774 (AEPEEKVPHLTE) are compositionally biased toward basic and acidic residues. An asymmetric dimethylarginine mark is found at Arg-915, Arg-925, and Arg-936. The disordered stretch occupies residues 947 to 1063 (QRGIPPPSVL…GRDHFGRPPV (117 aa)). Pro residues predominate over residues 961 to 970 (HPPPRGPFPP). 2 stretches are compositionally biased toward basic and acidic residues: residues 1009 to 1025 (EGDR…REGI) and 1032 to 1063 (DVRD…RPPV). Arg-1071 carries the asymmetric dimethylarginine modification. The segment at 1199–1268 (ATSQRKGENV…VVESTETEGT (70 aa)) is disordered. Positions 1249–1262 (GTAAGVESEAVVES) are enriched in low complexity.

In terms of assembly, interacts with POLR2A; via C-terminal heptapeptide repeat domain (CTD) phosphorylated at 'Ser-2' and 'Ser-5'. Identified in a complex with CDC5L and other spliceosomal proteins.

Its subcellular location is the nucleus. It localises to the nucleus matrix. Anti-terminator protein required to prevent early mRNA termination during transcription. Together with SCAF4, acts by suppressing the use of early, alternative poly(A) sites, thereby preventing the accumulation of non-functional truncated proteins. Mechanistically, associates with the phosphorylated C-terminal heptapeptide repeat domain (CTD) of the largest RNA polymerase II subunit (POLR2A), and subsequently binds nascent RNA upstream of early polyadenylation sites to prevent premature mRNA transcript cleavage and polyadenylation. Independently of SCAF4, also acts as a positive regulator of transcript elongation. The chain is SR-related and CTD-associated factor 8 from Rattus norvegicus (Rat).